A 158-amino-acid polypeptide reads, in one-letter code: MITIDILVESDGWNDEKMLYNITEKALKTIMHHLSLENVVSEISLLFTDDKHMAQINAQWRGKNKSTNVLSFPAFPLKVGDSPGPMLGDIIIARETVVLEAENEAKSFQDHLTHMIVHGILHLLGYNHETNEEASHMEELERKILQKLSIKDPYAELS.

Zn(2+)-binding residues include His118, His122, and His128.

It belongs to the endoribonuclease YbeY family. The cofactor is Zn(2+).

It localises to the cytoplasm. In terms of biological role, single strand-specific metallo-endoribonuclease involved in late-stage 70S ribosome quality control and in maturation of the 3' terminus of the 16S rRNA. The polypeptide is Endoribonuclease YbeY (Bartonella henselae (strain ATCC 49882 / DSM 28221 / CCUG 30454 / Houston 1) (Rochalimaea henselae)).